The following is a 133-amino-acid chain: Crossover junction endodeoxyribonuclease Hjc (133 aa).

Mg(2+) is bound at residue E12. S32 is an active-site residue. Residues D36 and E49 each coordinate Mg(2+).

Belongs to the Holliday junction resolvase Hjc family. In terms of assembly, homodimer. Mg(2+) serves as cofactor.

It carries out the reaction Endonucleolytic cleavage at a junction such as a reciprocal single-stranded crossover between two homologous DNA duplexes (Holliday junction).. In terms of biological role, a structure-specific endonuclease that resolves Holliday junction (HJ) intermediates during genetic recombination. Cleaves 4-way DNA junctions introducing paired nicks in opposing strands, leaving a 5'-terminal phosphate and a 3'-terminal hydroxyl group that are subsequently ligated to produce recombinant products. This is Crossover junction endodeoxyribonuclease Hjc from Methanocaldococcus jannaschii (strain ATCC 43067 / DSM 2661 / JAL-1 / JCM 10045 / NBRC 100440) (Methanococcus jannaschii).